Reading from the N-terminus, the 240-residue chain is MLTRKQQELLLFIHERMKESGVPPSFDEMKDALDLASKSGIHRLITALEERGFIRRLPNRARALEVIKLPEAYTPGARPQRGFSPSVIEGSLGKPKEPEPAPAVKAPANDFAGAATIPVMGRIAAGVPISAIQNNTHDLAVPVDMLGSGEHYALEVKGDSMIEAGIFDGDTVIIRNGNTANPGDIVVALVDDEEATLKRFRRKGASIALEAANPAYETRIFGPDRVKIQGKLVGLIRRYH.

The H-T-H motif DNA-binding region spans 26–46 (FDEMKDALDLASKSGIHRLIT). Catalysis depends on for autocatalytic cleavage activity residues Ser160 and Lys198.

Belongs to the peptidase S24 family. In terms of assembly, homodimer.

The enzyme catalyses Hydrolysis of Ala-|-Gly bond in repressor LexA.. Represses a number of genes involved in the response to DNA damage (SOS response), including recA and lexA. In the presence of single-stranded DNA, RecA interacts with LexA causing an autocatalytic cleavage which disrupts the DNA-binding part of LexA, leading to derepression of the SOS regulon and eventually DNA repair. In Agrobacterium fabrum (strain C58 / ATCC 33970) (Agrobacterium tumefaciens (strain C58)), this protein is LexA repressor.